Consider the following 203-residue polypeptide: Urease accessory protein UreE (203 aa).

Basic and acidic residues predominate over residues 170 to 190 (EHHGHSHSRSHDHDHDHDHQH). The tract at residues 170 to 203 (EHHGHSHSRSHDHDHDHDHQHGPSCSHGHHHGHR) is disordered.

The protein belongs to the UreE family.

The protein resides in the cytoplasm. Functionally, involved in urease metallocenter assembly. Binds nickel. Probably functions as a nickel donor during metallocenter assembly. This Burkholderia pseudomallei (strain 1710b) protein is Urease accessory protein UreE.